The chain runs to 364 residues: UDP-N-acetylglucosamine--N-acetylmuramyl-(pentapeptide) pyrophosphoryl-undecaprenol N-acetylglucosamine transferase (364 aa).

Residues 10–12 (TGG), Asn124, Ser195, Ile250, and Gln295 contribute to the UDP-N-acetyl-alpha-D-glucosamine site.

It belongs to the glycosyltransferase 28 family. MurG subfamily.

It is found in the cell membrane. The catalysed reaction is Mur2Ac(oyl-L-Ala-gamma-D-Glu-L-Lys-D-Ala-D-Ala)-di-trans,octa-cis-undecaprenyl diphosphate + UDP-N-acetyl-alpha-D-glucosamine = beta-D-GlcNAc-(1-&gt;4)-Mur2Ac(oyl-L-Ala-gamma-D-Glu-L-Lys-D-Ala-D-Ala)-di-trans,octa-cis-undecaprenyl diphosphate + UDP + H(+). Its pathway is cell wall biogenesis; peptidoglycan biosynthesis. In terms of biological role, cell wall formation. Catalyzes the transfer of a GlcNAc subunit on undecaprenyl-pyrophosphoryl-MurNAc-pentapeptide (lipid intermediate I) to form undecaprenyl-pyrophosphoryl-MurNAc-(pentapeptide)GlcNAc (lipid intermediate II). The protein is UDP-N-acetylglucosamine--N-acetylmuramyl-(pentapeptide) pyrophosphoryl-undecaprenol N-acetylglucosamine transferase of Levilactobacillus brevis (strain ATCC 367 / BCRC 12310 / CIP 105137 / JCM 1170 / LMG 11437 / NCIMB 947 / NCTC 947) (Lactobacillus brevis).